Reading from the N-terminus, the 449-residue chain is MVLSRLDFPSDFIFGSGTSASQVEGAALEDGKTSTAFEGFLTRMSGNDLSKGVEGYYKYKEDVQLMVQTGLDAYRFSISWSRLIPGGKGPVNPKGLQYYNNFIDELIKNGIQPHVTLLHFDIPDTLMTAYNGLKGQEFVEDFTAFADVCFKEFGDRVLYWTTVNEANNFASLTLDEGNFMPSTEPYIRGHNIILAHASAVKLYREKYKKTQNGFIGLNLYASWYFPETDDEQDSIAAQRAIDFTIGWIMQPLIYGEYPETLKKQVGERLPTFTKEESTFVKNSFDFIGVNCYVGTAVKDDPDSCNSKNKTIITDMSAKLSPKGELGGAYMKGLLEYFKRDYGNPPIYIQENGYWTPRELGVNDASRIEYHTASLASMHDAMKNGANVKGYFQWSFLDLLEVFKYSYGLYHVDLEDPTRERRPKASANWYAEFLKGCATSNGNAKVETPL.

A beta-D-glucoside is bound by residues glutamine 22, histidine 119, 164 to 165, tyrosine 292, glutamate 350, tryptophan 393, and tyrosine 406; that span reads NE. Glutamate 165 functions as the Proton donor in the catalytic mechanism. Glutamate 350 functions as the Nucleophile in the catalytic mechanism.

Belongs to the glycosyl hydrolase 1 family. In terms of tissue distribution, mainly expressed in flowers, flower buds and young leaves, and, to a lesser extent, in old leaves, stems and roots.

The protein resides in the cytoplasm. The protein operates within secondary metabolite biosynthesis; terpenoid biosynthesis. Functionally, component of the oleanane-type triterpene saponins (e.g. saponarioside A and saponarioside B) biosynthetic pathway, leading to the production of natural products with detergent properties used as traditional sources of soap. Beta-glycosidase that catalyzes the transfer of glucose moiety to QA-triFRXX to produce QA-triF(Q)RXX via the elongation of the C-28 sugar chain with a D-quinovose. The polypeptide is Glycosyl hydrolase-like protein 1 (Saponaria officinalis (Common soapwort)).